The primary structure comprises 439 residues: Proline--tRNA ligase (439 aa).

The protein belongs to the class-II aminoacyl-tRNA synthetase family. ProS type 2 subfamily. Homodimer.

Its subcellular location is the cytoplasm. The enzyme catalyses tRNA(Pro) + L-proline + ATP = L-prolyl-tRNA(Pro) + AMP + diphosphate. Functionally, catalyzes the attachment of proline to tRNA(Pro) in a two-step reaction: proline is first activated by ATP to form Pro-AMP and then transferred to the acceptor end of tRNA(Pro). In Rhodopseudomonas palustris (strain BisB18), this protein is Proline--tRNA ligase.